The primary structure comprises 396 residues: Acetyl-CoA acetyltransferase ERG10, cytosolic (396 aa).

Cysteine 91 acts as the Acyl-thioester intermediate in catalysis. Tyrosine 186 serves as a coordination point for K(+). CoA contacts are provided by asparagine 227 and lysine 230. K(+)-binding residues include alanine 246, proline 247, and valine 347. Catalysis depends on proton acceptor residues histidine 351 and cysteine 381. Asparagine 382 contacts chloride.

It belongs to the thiolase-like superfamily. Thiolase family. In terms of assembly, homotetramer. The cofactor is K(+).

The protein resides in the cytoplasm. It is found in the cytosol. It carries out the reaction 2 acetyl-CoA = acetoacetyl-CoA + CoA. The protein operates within metabolic intermediate biosynthesis; (R)-mevalonate biosynthesis; (R)-mevalonate from acetyl-CoA: step 1/3. Acetyl-CoA acetyltransferase; part of the first module of ergosterol biosynthesis pathway that includes the early steps of the pathway, conserved across all eukaryotes, and which results in the formation of mevalonate from acetyl-coenzyme A (acetyl-CoA). ERG10B catalyzes the formation of acetoacetyl-CoA from acetyl-CoA. The first module starts with the action of the cytosolic acetyl-CoA acetyltransferase ERG10B that catalyzes the formation of acetoacetyl-CoA. The hydroxymethylglutaryl-CoA synthases ERG13 then condenses acetyl-CoA with acetoacetyl-CoA to form HMG-CoA. The rate-limiting step of the early module is the reduction to mevalonate by the 3-hydroxy-3-methylglutaryl-coenzyme A (HMG-CoA) reductases HMG1. This is Acetyl-CoA acetyltransferase ERG10, cytosolic from Gibberella zeae (strain ATCC MYA-4620 / CBS 123657 / FGSC 9075 / NRRL 31084 / PH-1) (Wheat head blight fungus).